The following is a 438-amino-acid chain: tRNA modification GTPase MnmE (438 aa).

3 residues coordinate (6S)-5-formyl-5,6,7,8-tetrahydrofolate: arginine 20, glutamate 79, and lysine 119. Residues glycine 215 to glycine 360 form the TrmE-type G domain. GTP contacts are provided by residues asparagine 225 to serine 230, serine 244 to threonine 250, and aspartate 269 to glycine 272. Positions 229 and 250 each coordinate Mg(2+). Residue lysine 438 coordinates (6S)-5-formyl-5,6,7,8-tetrahydrofolate.

It belongs to the TRAFAC class TrmE-Era-EngA-EngB-Septin-like GTPase superfamily. TrmE GTPase family. In terms of assembly, homodimer. Heterotetramer of two MnmE and two MnmG subunits. Requires K(+) as cofactor.

The protein resides in the cytoplasm. Functionally, exhibits a very high intrinsic GTPase hydrolysis rate. Involved in the addition of a carboxymethylaminomethyl (cmnm) group at the wobble position (U34) of certain tRNAs, forming tRNA-cmnm(5)s(2)U34. The polypeptide is tRNA modification GTPase MnmE (Parvibaculum lavamentivorans (strain DS-1 / DSM 13023 / NCIMB 13966)).